The chain runs to 596 residues: Chaperone protein DnaK (596 aa).

Phosphothreonine; by autocatalysis is present on threonine 174. A disordered region spans residues 576–596 (ANATKDQSSKDQEEVATVVEE).

This sequence belongs to the heat shock protein 70 family.

In terms of biological role, acts as a chaperone. The chain is Chaperone protein DnaK from Mycoplasmopsis synoviae (strain 53) (Mycoplasma synoviae).